Here is a 283-residue protein sequence, read N- to C-terminus: Syntaxin VAM3 (283 aa).

The segment at 1-26 (MSFFDIEAQSSKGNSQQEPQFSTNQK) is disordered. Residues 1–261 (MSFFDIEAQS…ADQHQRDRNK (261 aa)) lie on the Cytoplasmic side of the membrane. Over residues 8–25 (AQSSKGNSQQEPQFSTNQ) the composition is skewed to polar residues. Coiled-coil stretches lie at residues 28-48 (KELS…EKEC) and 84-111 (LIHQ…SYNQ). Disordered regions lie at residues 116–146 (FPLK…DPES) and 162–182 (NEGQ…QGLS). The span at 127 to 144 (SKERKDIHPRTEAVRQDP) shows a compositional bias: basic and acidic residues. A coiled-coil region spans residues 169–189 (QLQEEQEQQQQGLSQEELDFQ). The t-SNARE coiled-coil homology domain occupies 190-252 (TIIHQERSQQ…QNANKQLTRA (63 aa)). The helical; Anchor for type IV membrane protein transmembrane segment at 262 to 282 (CGKVTLIIIIVVCMVVLLAVL) threads the bilayer. Position 283 (Ser-283) is a topological domain, vacuolar.

It belongs to the syntaxin family. As to quaternary structure, associates with VAM7.

It localises to the vacuole membrane. Its function is as follows. Required for vacuolar assembly. Provides the t-SNARE function in a late step of the vacuolar assembly. Required for homotypic vacuole membrane fusion, autophagy and fusion of biosynthetic transport vesicles with the vacuole. Required for the delivery of alpha-factor receptor-ligand complexes to the vacuole. The protein is Syntaxin VAM3 (VAM3) of Saccharomyces cerevisiae (strain ATCC 204508 / S288c) (Baker's yeast).